Here is a 190-residue protein sequence, read N- to C-terminus: Large ribosomal subunit protein bL17 (190 aa).

Residues 128-190 form a disordered region; the sequence is KKTAGRKAAQ…VEENNEQNKA (63 aa). Residues 143–154 are compositionally biased toward low complexity; sequence ALAPAEETPAPT. The span at 179–190 shows a compositional bias: acidic residues; sequence LAVEENNEQNKA.

It belongs to the bacterial ribosomal protein bL17 family. In terms of assembly, part of the 50S ribosomal subunit. Contacts protein L32.

This chain is Large ribosomal subunit protein bL17, found in Salinispora tropica (strain ATCC BAA-916 / DSM 44818 / JCM 13857 / NBRC 105044 / CNB-440).